A 121-amino-acid polypeptide reads, in one-letter code: Large ribosomal subunit protein bL20 (121 aa).

This sequence belongs to the bacterial ribosomal protein bL20 family.

In terms of biological role, binds directly to 23S ribosomal RNA and is necessary for the in vitro assembly process of the 50S ribosomal subunit. It is not involved in the protein synthesizing functions of that subunit. The chain is Large ribosomal subunit protein bL20 from Wolbachia pipientis subsp. Culex pipiens (strain wPip).